A 158-amino-acid chain; its full sequence is Ribonuclease H (158 aa).

Residues 5 to 146 form the RNase H type-1 domain; the sequence is MRKQIEIFTD…CDQLAKQGAE (142 aa). Mg(2+)-binding residues include Asp-14, Glu-52, Asp-74, and Asp-138.

It belongs to the RNase H family. As to quaternary structure, monomer. It depends on Mg(2+) as a cofactor.

The protein localises to the cytoplasm. The enzyme catalyses Endonucleolytic cleavage to 5'-phosphomonoester.. Functionally, endonuclease that specifically degrades the RNA of RNA-DNA hybrids. This is Ribonuclease H from Mannheimia succiniciproducens (strain KCTC 0769BP / MBEL55E).